The primary structure comprises 656 residues: ATP-dependent zinc metalloprotease FtsH (656 aa).

The Cytoplasmic portion of the chain corresponds to 1–45 (MAIFARRIGLNQHSAYGSRQRVIVMKNFGKKALIKQQSPKRVAWT). Residues 46-66 (GALAASLIMLPTMFGGNPVLA) form a helical membrane-spanning segment. Residues 67 to 147 (QKAERESLSY…EISSANSRAA (81 aa)) lie on the Lumenal side of the membrane. A helical transmembrane segment spans residues 148–168 (VGLLINLMWILPLVALMLLFL). Over 169 to 656 (RRSTNASSQA…DEQLSMVNSQ (488 aa)) the chain is Cytoplasmic. 239 to 246 (GPPGTGKT) serves as a coordination point for ATP. Residue H460 participates in Zn(2+) binding. Residue E461 is part of the active site. 2 residues coordinate Zn(2+): H464 and D538.

It in the central section; belongs to the AAA ATPase family. In the C-terminal section; belongs to the peptidase M41 family. As to quaternary structure, homohexamer. Requires Zn(2+) as cofactor.

It is found in the cellular thylakoid membrane. Its function is as follows. Acts as a processive, ATP-dependent zinc metallopeptidase for both cytoplasmic and membrane proteins. Plays a role in the quality control of integral membrane proteins. In Nostoc sp. (strain PCC 7120 / SAG 25.82 / UTEX 2576), this protein is ATP-dependent zinc metalloprotease FtsH.